Here is a 282-residue protein sequence, read N- to C-terminus: Release factor glutamine methyltransferase (282 aa).

S-adenosyl-L-methionine is bound by residues 120 to 124, D143, and N189; that span reads GVGSG. 189 to 192 is a binding site for substrate; sequence NPPY.

Belongs to the protein N5-glutamine methyltransferase family. PrmC subfamily.

It catalyses the reaction L-glutaminyl-[peptide chain release factor] + S-adenosyl-L-methionine = N(5)-methyl-L-glutaminyl-[peptide chain release factor] + S-adenosyl-L-homocysteine + H(+). Its function is as follows. Methylates the class 1 translation termination release factors RF1/PrfA and RF2/PrfB on the glutamine residue of the universally conserved GGQ motif. The polypeptide is Release factor glutamine methyltransferase (Dictyoglomus turgidum (strain DSM 6724 / Z-1310)).